The sequence spans 564 residues: Proline--tRNA ligase (564 aa).

Belongs to the class-II aminoacyl-tRNA synthetase family. ProS type 1 subfamily. As to quaternary structure, homodimer.

It localises to the cytoplasm. The catalysed reaction is tRNA(Pro) + L-proline + ATP = L-prolyl-tRNA(Pro) + AMP + diphosphate. In terms of biological role, catalyzes the attachment of proline to tRNA(Pro) in a two-step reaction: proline is first activated by ATP to form Pro-AMP and then transferred to the acceptor end of tRNA(Pro). As ProRS can inadvertently accommodate and process non-cognate amino acids such as alanine and cysteine, to avoid such errors it has two additional distinct editing activities against alanine. One activity is designated as 'pretransfer' editing and involves the tRNA(Pro)-independent hydrolysis of activated Ala-AMP. The other activity is designated 'posttransfer' editing and involves deacylation of mischarged Ala-tRNA(Pro). The misacylated Cys-tRNA(Pro) is not edited by ProRS. The chain is Proline--tRNA ligase from Xanthomonas axonopodis pv. citri (strain 306).